The chain runs to 261 residues: Carbonic anhydrase 1 (261 aa).

Ala2 bears the N-acetylalanine mark. Residues 4 to 261 enclose the Alpha-carbonic anhydrase domain; sequence PDWGYDDKNG…LKGRTVRASF (258 aa). The active-site Proton donor/acceptor is the His65. Residues His95, His97, and His120 each contribute to the Zn(2+) site. Substrate contacts are provided by residues Thr200 and 200–201; that span reads TH. The tract at residues 238-261 is disordered; the sequence is NPVPIQRNNRPTQPLKGRTVRASF.

The protein belongs to the alpha-carbonic anhydrase family. Requires Zn(2+) as cofactor.

It is found in the cytoplasm. It carries out the reaction hydrogencarbonate + H(+) = CO2 + H2O. The enzyme catalyses urea = cyanamide + H2O. With respect to regulation, inhibited by acetazolamide. Catalyzes the reversible hydration of carbon dioxide. Can hydrate cyanamide to urea. This chain is Carbonic anhydrase 1 (CA1), found in Macaca mulatta (Rhesus macaque).